The sequence spans 2217 residues: Protein irg-7 (2217 aa).

An N-terminal signal peptide occupies residues 1–16 (MRNWVLIAALAVICLA). EGF-like domains follow at residues 370–405 (SGST…FHCQ) and 864–896 (TGTY…ESCE). 8 disulfide bridges follow: cysteine 379-cysteine 393, cysteine 395-cysteine 404, cysteine 868-cysteine 873, cysteine 886-cysteine 895, cysteine 1212-cysteine 1312, cysteine 1285-cysteine 1304, cysteine 1508-cysteine 1521, and cysteine 1523-cysteine 1532. The 126-residue stretch at 1188–1313 (IGQYCIKFMA…CAEPRAFACQ (126 aa)) folds into the C-type lectin domain. One can recognise an EGF-like 3 domain in the interval 1499–1533 (TGSRCTVPICVNGGTRNPDEATCSCPDGYEGPNCQ). A VWFA domain is found at 2016–2202 (DVVFMIDGSQ…NNQIKTIQQL (187 aa)).

It localises to the secreted. Plays a role in innate immunity, probably via the atf-7 pathway, to confer resistance to pathogenic bacteria. May also play a role in the regulation of longevity. The polypeptide is Protein irg-7 (Caenorhabditis elegans).